The primary structure comprises 436 residues: Adenylosuccinate synthetase (436 aa).

GTP-binding positions include 12–18 (GDEGKGK) and 40–42 (GHT). The active-site Proton acceptor is D13. Mg(2+)-binding residues include D13 and G40. IMP contacts are provided by residues 13–16 (DEGK), 38–41 (NAGH), T128, R142, Q223, T238, and R302. Residue H41 is the Proton donor of the active site. 298–304 (TTTGRRR) provides a ligand contact to substrate. GTP-binding positions include R304, 330 to 332 (KLD), and 412 to 414 (SLG).

The protein belongs to the adenylosuccinate synthetase family. In terms of assembly, homodimer. It depends on Mg(2+) as a cofactor.

It is found in the cytoplasm. It catalyses the reaction IMP + L-aspartate + GTP = N(6)-(1,2-dicarboxyethyl)-AMP + GDP + phosphate + 2 H(+). Its pathway is purine metabolism; AMP biosynthesis via de novo pathway; AMP from IMP: step 1/2. Functionally, plays an important role in the de novo pathway of purine nucleotide biosynthesis. Catalyzes the first committed step in the biosynthesis of AMP from IMP. This chain is Adenylosuccinate synthetase, found in Prochlorococcus marinus (strain MIT 9312).